The following is a 165-amino-acid chain: UPF0763 protein NIS_0363 (165 aa).

This sequence belongs to the UPF0763 family.

In Nitratiruptor sp. (strain SB155-2), this protein is UPF0763 protein NIS_0363.